The sequence spans 499 residues: Protein-tyrosine sulfotransferase (499 aa).

The Cytoplasmic segment spans residues 1–9 (MRLPYRNKK). Residues 10–30 (VTLWVLFGIIVITMFLFKFTE) traverse the membrane as a helical; Signal-anchor for type II membrane protein segment. The Lumenal portion of the chain corresponds to 31–499 (LRPTCLFKVD…NIMEDPMADT (469 aa)). 80–84 (RSGTT) provides a ligand contact to 3'-phosphoadenylyl sulfate. The cysteines at positions 98 and 158 are disulfide-linked. Glu-101 acts as the Proton donor/acceptor in catalysis. The tract at residues 103-107 (RVIPR) is interaction with peptide substrate. 3 residues coordinate 3'-phosphoadenylyl sulfate: Arg-185, Ser-193, and Arg-197. A disulfide bond links Cys-227 and Cys-235. 3'-phosphoadenylyl sulfate-binding positions include Tyr-240, 287–296 (SSDQVIKPVN), and Lys-302. Residues Asn-346 and Asn-380 are each glycosylated (N-linked (GlcNAc...) asparagine). 2 disordered regions span residues 362–460 (KQVL…QKPK) and 476–499 (NNIN…MADT). Composition is skewed to low complexity over residues 375–400 (TNTI…IIPE) and 408–434 (HVQQ…QQQQ). Over residues 443–460 (EREAEPDREQQLLHQKPK) the composition is skewed to basic and acidic residues. The segment covering 476–491 (NNINNNINNNNNNNNI) has biased composition (low complexity).

Belongs to the protein sulfotransferase family.

The protein resides in the golgi apparatus membrane. It carries out the reaction L-tyrosyl-[protein] + 3'-phosphoadenylyl sulfate = O-sulfo-L-tyrosine-[protein] + adenosine 3',5'-bisphosphate + H(+). In terms of biological role, catalyzes the O-sulfation of tyrosine residues within acidic motifs of polypeptides. Has a role in protein secretion. The chain is Protein-tyrosine sulfotransferase from Drosophila melanogaster (Fruit fly).